We begin with the raw amino-acid sequence, 320 residues long: Malate dehydrogenase (320 aa).

Residues 10–15 and aspartate 34 each bind NAD(+); that span reads GAGMIG. Substrate contacts are provided by arginine 83 and arginine 89. Residues asparagine 96 and 119–121 each bind NAD(+); that span reads ITN. Asparagine 121 and arginine 152 together coordinate substrate. Histidine 176 (proton acceptor) is an active-site residue.

This sequence belongs to the LDH/MDH superfamily. MDH type 3 family.

It catalyses the reaction (S)-malate + NAD(+) = oxaloacetate + NADH + H(+). Catalyzes the reversible oxidation of malate to oxaloacetate. The chain is Malate dehydrogenase from Caulobacter sp. (strain K31).